The chain runs to 337 residues: Glyceraldehyde-3-phosphate dehydrogenase (337 aa).

Residues 12–13, D34, and R79 each bind NAD(+); that span reads RI. D-glyceraldehyde 3-phosphate contacts are provided by residues 150 to 152, T181, 210 to 211, and R233; these read SCT and TG. C151 functions as the Nucleophile in the catalytic mechanism. N315 provides a ligand contact to NAD(+).

The protein belongs to the glyceraldehyde-3-phosphate dehydrogenase family. Homotetramer.

The protein resides in the cytoplasm. It carries out the reaction D-glyceraldehyde 3-phosphate + phosphate + NAD(+) = (2R)-3-phospho-glyceroyl phosphate + NADH + H(+). Its pathway is carbohydrate degradation; glycolysis; pyruvate from D-glyceraldehyde 3-phosphate: step 1/5. This chain is Glyceraldehyde-3-phosphate dehydrogenase (GPD), found in Ajellomyces capsulatus (Darling's disease fungus).